Consider the following 669-residue polypeptide: Soluble guanylate cyclase 89Db (669 aa).

H104 contributes to the heme binding site. A coiled-coil region spans residues 430-458 (QHCSKLEIMFEKEEQRSDELEKSLELADS). Positions 494–620 (SVIFIEVMNI…DTVNTASRME (127 aa)) constitute a Guanylate cyclase domain.

It belongs to the adenylyl cyclase class-4/guanylyl cyclase family. In terms of assembly, heterodimer; with Gyc88E, in the presence of magnesium or manganese. Heme serves as cofactor. In terms of tissue distribution, expressed in embryos in a segmental pattern in the ventral nerve cord (VNC) and in the brain, beginning at stage 13 and continuing through to stage 17. Colocalized with Gyc-89Db in several peripheral neurons that innervate trachea, basiconical sensilla and the sensory cones in the posterior segments of the embryo. Expression in wandering 3rd instar larvae is most prominent in a small cluster of cells located in the anterior medial region of each brain lobe. In the VNC, expression is found in scattered cells both laterally and at the midline.

The protein resides in the cytoplasm. It carries out the reaction GTP = 3',5'-cyclic GMP + diphosphate. With respect to regulation, probably not activated by nitric oxide (NO). Heterodimer exhibits some stimulation, compounds (SIN-1 and two of the NONOates) that were ineffective at stimulating Gyc-88E homodimer did stimulate the heterodimer. Its function is as follows. Heterodimers with Gyc88E are activated in response to changing oxygen concentrations, alerting flies to hypoxic environments. Under normal oxygen concentrations, oxygen binds to the heme group and results in low levels of guanylyl cyclase activity. When exposed to reduced oxygen concentrations, the oxygen dissociates from the heme group resulting in activation of the enzyme. This chain is Soluble guanylate cyclase 89Db, found in Drosophila melanogaster (Fruit fly).